We begin with the raw amino-acid sequence, 117 residues long: Large ribosomal subunit protein uL24 (117 aa).

Residues 1–12 (MSKKNSQTSPQR) show a composition bias toward polar residues. The disordered stretch occupies residues 1–20 (MSKKNSQTSPQRQKMHVKKG).

Belongs to the universal ribosomal protein uL24 family. In terms of assembly, part of the 50S ribosomal subunit.

Its function is as follows. One of two assembly initiator proteins, it binds directly to the 5'-end of the 23S rRNA, where it nucleates assembly of the 50S subunit. One of the proteins that surrounds the polypeptide exit tunnel on the outside of the subunit. The chain is Large ribosomal subunit protein uL24 from Microcystis aeruginosa (strain NIES-843 / IAM M-2473).